Here is a 368-residue protein sequence, read N- to C-terminus: CST complex subunit STN1 (368 aa).

The tract at residues 1–185 (MQPGSSRCEE…KIYDQPFRSS (185 aa)) is interaction with CTC1. Residues 57–155 (VDVLGTVVGV…EIHATAYYKV (99 aa)) constitute a DNA-binding region (OB). Winged helix-turn-helix (wHTH) stretches follow at residues 191-295 (EALS…YVTR) and 296-368 (EDKD…YTAF).

Belongs to the STN1 family. As to quaternary structure, component of the CST complex, composed of TEN1/C17orf106, CTC1/C17orf68 and STN1; in the complex interacts directly with TEN1 and CTC1. Interacts with ACD/TPP1, POT1 and POLA1.

It localises to the nucleus. It is found in the chromosome. The protein resides in the telomere. Functionally, component of the CST complex proposed to act as a specialized replication factor promoting DNA replication under conditions of replication stress or natural replication barriers such as the telomere duplex. The CST complex binds single-stranded DNA with high affinity in a sequence-independent manner, while isolated subunits bind DNA with low affinity by themselves. Initially the CST complex has been proposed to protect telomeres from DNA degradation. However, the CST complex has been shown to be involved in several aspects of telomere replication. The CST complex inhibits telomerase and is involved in telomere length homeostasis; it is proposed to bind to newly telomerase-synthesized 3' overhangs and to terminate telomerase action implicating the association with the ACD:POT1 complex thus interfering with its telomerase stimulation activity. The CST complex is also proposed to be involved in fill-in synthesis of the telomeric C-strand probably implicating recruitment and activation of DNA polymerase alpha. The CST complex facilitates recovery from many forms of exogenous DNA damage; seems to be involved in the re-initiation of DNA replication at repaired forks and/or dormant origins. Required for efficicient replication of the duplex region of the telomere. Promotes efficient replication of lagging-strand telomeres. Promotes general replication start following replication-fork stalling implicating new origin firing. May be in involved in C-strand fill-in during late S/G2 phase independent of its role in telomere duplex replication. This Macaca fascicularis (Crab-eating macaque) protein is CST complex subunit STN1.